The primary structure comprises 161 residues: Suppressor of kinetochore protein 1 (161 aa).

An interaction with the F-box domain of F-box proteins region spans residues 102-161; it reads VLASNYLDIKPLLDTGCKTVANMIRGKSPEDIRKTFNIPNDFTPEEEEQIRKENEWAEDR.

The protein belongs to the SKP1 family. In terms of assembly, essential component of the E3 ubiquitin ligase Skp1-Cullin-1-F-box (SCF) complex. Interacts with cul1, fbh1, mcs2, pip1, pof1, pof2, pof3, pof4, pof5, pof6, pof7, pof8, pof9, pof10, pof11, pof12, pof13, pof14, pop1, pop2 and tfb3. Forms a complex with pof6 and sip1. Component of the RAVE complex composed of rav1, rav2 and skp1.

The protein resides in the cytoplasm. It localises to the nucleus. Functionally, required for cig2 degradation in the G2 and M phases of the cell cycle. Together with pof6, essential for septum processing and cell separation. Involved in mitotic progression, essential for the execution of anaphase B; required for coordinated structural alterations of mitotic spindles and segregation of nuclear membrane structures at anaphase. Involved in the DNA damage checkpoint pathway and maintenance of genome integrity. Component of the RAVE complex which is required for stable assembly of the vacuolar ATPase complex V-ATPase. The sequence is that of Suppressor of kinetochore protein 1 from Schizosaccharomyces pombe (strain 972 / ATCC 24843) (Fission yeast).